The primary structure comprises 235 residues: Orotidine 5'-phosphate decarboxylase (235 aa).

Substrate is bound by residues Asp11, Lys33, 60–69 (DLKFHDIPNT), Thr119, Arg180, Gln189, Gly209, and Arg210. Lys62 (proton donor) is an active-site residue.

This sequence belongs to the OMP decarboxylase family. Type 1 subfamily. In terms of assembly, homodimer.

The catalysed reaction is orotidine 5'-phosphate + H(+) = UMP + CO2. Its pathway is pyrimidine metabolism; UMP biosynthesis via de novo pathway; UMP from orotate: step 2/2. Catalyzes the decarboxylation of orotidine 5'-monophosphate (OMP) to uridine 5'-monophosphate (UMP). The chain is Orotidine 5'-phosphate decarboxylase from Alkalilimnicola ehrlichii (strain ATCC BAA-1101 / DSM 17681 / MLHE-1).